Reading from the N-terminus, the 105-residue chain is Small ribosomal subunit protein uS10 (105 aa).

It belongs to the universal ribosomal protein uS10 family. Part of the 30S ribosomal subunit.

Its function is as follows. Involved in the binding of tRNA to the ribosomes. The protein is Small ribosomal subunit protein uS10 of Gloeothece citriformis (strain PCC 7424) (Cyanothece sp. (strain PCC 7424)).